The chain runs to 541 residues: Chaperonin GroEL (541 aa).

ATP-binding positions include 29-32, 86-90, glycine 413, 476-478, and aspartate 492; these read TLGP, DGTTT, and NAA.

This sequence belongs to the chaperonin (HSP60) family. In terms of assembly, forms a cylinder of 14 subunits composed of two heptameric rings stacked back-to-back. Interacts with the co-chaperonin GroES.

It is found in the cytoplasm. It carries out the reaction ATP + H2O + a folded polypeptide = ADP + phosphate + an unfolded polypeptide.. In terms of biological role, together with its co-chaperonin GroES, plays an essential role in assisting protein folding. The GroEL-GroES system forms a nano-cage that allows encapsulation of the non-native substrate proteins and provides a physical environment optimized to promote and accelerate protein folding. The sequence is that of Chaperonin GroEL from Enterococcus faecalis (strain ATCC 700802 / V583).